Reading from the N-terminus, the 276-residue chain is Streptothricin hydrolase (276 aa).

The active-site Nucleophile is the cysteine 176. The segment at 250–276 (PEAPAAAAAPAAGTGLSPAGPPPAPAR) is disordered. The span at 252–267 (APAAAAAPAAGTGLSP) shows a compositional bias: low complexity.

It belongs to the isochorismatase family. As to quaternary structure, homodimer. It depends on Does not require a metal cofactor. as a cofactor.

The catalysed reaction is streptothricin F + H2O = streptothricin F acid. Catalyzes the hydrolysis of the amide bond of streptolidine lactam, thereby conferring streptothricin (ST) resistance. Can hydrolyze streptothricin-F and streptothricin-D. However, this strain is believed to be a ST nonproducer, which raises the possibility that its true role may not be its involvement in self-resistance to STs. May catalyze the hydrolysis of naturally occurring cyclic amide compounds that are structurally related to STs. The polypeptide is Streptothricin hydrolase (sttH) (Streptomyces noursei (Streptomyces albulus)).